Here is a 234-residue protein sequence, read N- to C-terminus: Myelin protein zero-like protein 3 (234 aa).

Residues 1–31 form the signal peptide; the sequence is MQQSGVPGSRGCALCPLLGVLFFQGVYVIFS. The 117-residue stretch at 32-148 folds into the Ig-like V-type domain; the sequence is LEIKADAHVR…NIPATELTVT (117 aa). Topologically, residues 32-158 are extracellular; that stretch reads LEIKADAHVR…ERGFGTMLSS (127 aa). A disulfide bond links Cys-52 and Cys-128. An N-linked (GlcNAc...) asparagine glycan is attached at Asn-123. Residues 159 to 179 form a helical membrane-spanning segment; sequence VALLSILVFIPSTVVVILLLV. The Cytoplasmic portion of the chain corresponds to 180 to 234; that stretch reads RMGRKSAGLKKRSKSGYKKSSIEVSDDTDQEGDDCMAKLCVRCAECVDSDYEETY.

The protein belongs to the myelin P0 protein family.

The protein localises to the membrane. In terms of biological role, mediates homophilic cell-cell adhesion. In Bos taurus (Bovine), this protein is Myelin protein zero-like protein 3 (MPZL3).